The primary structure comprises 429 residues: Cytochrome bc1 complex Rieske iron-sulfur subunit (429 aa).

The disordered stretch occupies residues methionine 1–valine 45. 3 helical membrane passes run valine 96–phenylalanine 116, proline 137–tyrosine 157, and phenylalanine 207–isoleucine 227. A Rieske domain is found at arginine 316–valine 410. [2Fe-2S] cluster-binding residues include cysteine 353, histidine 355, cysteine 372, and histidine 375. The cysteines at positions 358 and 374 are disulfide-linked.

Belongs to the Rieske iron-sulfur protein family. In terms of assembly, the cytochrome bc1 complex is composed of a cytochrome b (QcrB), the Rieske iron-sulfur protein (QcrA) and a diheme cytochrome c (QcrC) subunit. Requires [2Fe-2S] cluster as cofactor.

The protein resides in the cell membrane. Its function is as follows. Iron-sulfur subunit of the cytochrome bc1 complex, an essential component of the respiratory electron transport chain required for ATP synthesis. The bc1 complex catalyzes the oxidation of menaquinol and the reduction of cytochrome c in the respiratory chain. The bc1 complex operates through a Q-cycle mechanism that couples electron transfer to generation of the proton gradient that drives ATP synthesis. This chain is Cytochrome bc1 complex Rieske iron-sulfur subunit (qcrA), found in Mycobacterium tuberculosis (strain CDC 1551 / Oshkosh).